The sequence spans 383 residues: Putative glutamate--cysteine ligase 2-2 (383 aa).

The disordered stretch occupies residues 35–56 (RGDRDGAGGPPGGADPDGDLDG).

The protein belongs to the glutamate--cysteine ligase type 2 family. YbdK subfamily.

It catalyses the reaction L-cysteine + L-glutamate + ATP = gamma-L-glutamyl-L-cysteine + ADP + phosphate + H(+). Its function is as follows. ATP-dependent carboxylate-amine ligase which exhibits weak glutamate--cysteine ligase activity. This is Putative glutamate--cysteine ligase 2-2 from Frankia alni (strain DSM 45986 / CECT 9034 / ACN14a).